A 732-amino-acid polypeptide reads, in one-letter code: Calcineurin-interacting protein 2 (732 aa).

6 disordered regions span residues 1–24, 115–169, 181–232, 310–351, 372–397, and 426–708; these read MNRG…REPY, DYEP…ALPK, QKKD…LDDR, ILSR…TSRR, RSQS…STVS, and QTVT…PLEE. The segment covering 8–17 has biased composition (polar residues); it reads YNRSRSTSSR. Over residues 117–129 the composition is skewed to basic and acidic residues; that stretch reads EPLRKEPELKEQK. Polar residues-rich tracts occupy residues 151–163 and 189–208; these read SGIT…SSRT and IPRQ…NNEL. Residues 312-323 show a composition bias toward low complexity; it reads SRSVSTSPSSVT. The span at 324-351 shows a compositional bias: polar residues; sequence DNIPKTSTSRIPSSENPKTMEHTTTSRR. Residues 426–439 are compositionally biased toward polar residues; the sequence is QTVTNVRVPSSRGS. Basic and acidic residues-rich tracts occupy residues 526 to 538 and 546 to 557; these read QSPE…RFAD and PGDHQAREEDLP. The span at 607–619 shows a compositional bias: polar residues; that stretch reads SVTPSEKSLPRNS. A compositionally biased stretch (low complexity) spans 688-705; that stretch reads NSPNKSSSSSKARPSAAP.

Interacts with tax-6. In terms of tissue distribution, expressed in intestine.

The chain is Calcineurin-interacting protein 2 from Caenorhabditis elegans.